A 430-amino-acid chain; its full sequence is Glutamyl-tRNA reductase (430 aa).

Substrate contacts are provided by residues 49–52, S109, 114–116, and Q120; these read TCNR and EGQ. C50 serves as the catalytic Nucleophile. NADP(+) is bound at residue 189–194; sequence GAGKMA.

It belongs to the glutamyl-tRNA reductase family. Homodimer.

It carries out the reaction (S)-4-amino-5-oxopentanoate + tRNA(Glu) + NADP(+) = L-glutamyl-tRNA(Glu) + NADPH + H(+). The protein operates within porphyrin-containing compound metabolism; protoporphyrin-IX biosynthesis; 5-aminolevulinate from L-glutamyl-tRNA(Glu): step 1/2. It participates in porphyrin-containing compound metabolism; chlorophyll biosynthesis. Functionally, catalyzes the NADPH-dependent reduction of glutamyl-tRNA(Glu) to glutamate 1-semialdehyde (GSA). The protein is Glutamyl-tRNA reductase of Crocosphaera subtropica (strain ATCC 51142 / BH68) (Cyanothece sp. (strain ATCC 51142)).